We begin with the raw amino-acid sequence, 364 residues long: DNA replication and repair protein RecF (364 aa).

30–37 is an ATP binding site; the sequence is GNNAQGKT.

The protein belongs to the RecF family.

The protein resides in the cytoplasm. The RecF protein is involved in DNA metabolism; it is required for DNA replication and normal SOS inducibility. RecF binds preferentially to single-stranded, linear DNA. It also seems to bind ATP. This Clostridium botulinum (strain Loch Maree / Type A3) protein is DNA replication and repair protein RecF.